Here is a 204-residue protein sequence, read N- to C-terminus: MQSYASAMLSVFNSDDYSPAVQENIPALRRSSSFLCTESCNSKYQCETGENSKGNVQDRVKRPMNAFIVWSRDQRRKMALENPRMRNSEISKQLGYQWKMLTEAEKWPFFQEAQKLQAMHREKYPNYKYRPRRKAKMLPKNCSLLPADPASVLCSEVQLDNRLYRDDCTKATHSRMEHQLGHLPPINAASSPQQRDRYSHWTKL.

The segment at 59 to 136 (RVKRPMNAFI…YKYRPRRKAK (78 aa)) is sufficient for interaction with KPNB1. The HMG box DNA-binding region spans 60–128 (VKRPMNAFIV…MHREKYPNYK (69 aa)). Required for nuclear localization stretches follow at residues 61 to 77 (KRPM…QRRK) and 130 to 136 (RPRRKAK). Residues 107–139 (WPFFQEAQKLQAMHREKYPNYKYRPRRKAKMLP) are sufficient for interaction with EP300. Lysine 136 carries the post-translational modification N6-acetyllysine. A necessary for interaction with ZNF208 isoform KRAB-O region spans residues 138-155 (LPKNCSLLPADPASVLCS). The segment at 175 to 204 (RMEHQLGHLPPINAASSPQQRDRYSHWTKL) is disordered. The segment covering 194–204 (QRDRYSHWTKL) has biased composition (basic and acidic residues). Residues 198–204 (YSHWTKL) are necessary for interaction with SLC9A3R2.

It belongs to the SRY family. Interacts with CALM, EP300, HDAC3, KPNB1, ZNF208 isoform KRAB-O, PARP1, SLC9A3R2 and WT1. The interaction with EP300 modulates its DNA-binding activity. The interaction with KPNB1 is sensitive to dissociation by Ran in the GTP-bound form. Interaction with PARP1 impaired its DNA-binding activity. Phosphorylated on serine residues by PKA. Phosphorylation by PKA enhances its DNA-binding activity and stimulates transcription repression. Post-translationally, acetylation of Lys-136 contributes to its nuclear localization and enhances its interaction with KPNB1. Deacetylated by HDAC3. In terms of processing, poly-ADP-ribosylated by PARP1. ADP-ribosylation reduces its DNA-binding activity.

It is found in the nucleus speckle. Its subcellular location is the cytoplasm. The protein localises to the nucleus. Its function is as follows. Transcriptional regulator that controls a genetic switch in male development. It is necessary and sufficient for initiating male sex determination by directing the development of supporting cell precursors (pre-Sertoli cells) as Sertoli rather than granulosa cells. Involved in different aspects of gene regulation including promoter activation or repression. Binds to the DNA consensus sequence 5'-[AT]AACAA[AT]-3'. SRY HMG box recognizes DNA by partial intercalation in the minor groove and promotes DNA bending. Also involved in pre-mRNA splicing. In male adult brain involved in the maintenance of motor functions of dopaminergic neurons. In Homo sapiens (Human), this protein is Sex-determining region Y protein.